Here is a 207-residue protein sequence, read N- to C-terminus: Dephospho-CoA kinase (207 aa).

Residues 8 to 207 (AIALTGSIGS…LPCVDCVQSS (200 aa)) enclose the DPCK domain. Residue 16–21 (GSGKST) coordinates ATP.

It belongs to the CoaE family.

Its subcellular location is the cytoplasm. It carries out the reaction 3'-dephospho-CoA + ATP = ADP + CoA + H(+). The protein operates within cofactor biosynthesis; coenzyme A biosynthesis; CoA from (R)-pantothenate: step 5/5. In terms of biological role, catalyzes the phosphorylation of the 3'-hydroxyl group of dephosphocoenzyme A to form coenzyme A. This Helicobacter hepaticus (strain ATCC 51449 / 3B1) protein is Dephospho-CoA kinase.